A 235-amino-acid polypeptide reads, in one-letter code: MNFNYFILVLFFITSGHAKSETRDVHQEAENHIKRGSNTGFNFKTLDKEKRSAEEQNLAEDLVKRGSNKGFNFMVDMIQALSNGKRSAEEQDLAEDLVTRGSNKGFNFMVDMINALSNGKRSAEEQDLAEDLVKRGSNKGFNFMVDMINALSNGKRSAEEQDLAEDLVTRRSNKGFNFMVDMIQALSKGKRSAEDQDLAEDLVTRGSNKGFNFMVDMIQALSKGKRSAEQEKDMK.

Residues 1–18 (MNFNYFILVLFFITSGHA) form the signal peptide. 2 propeptides span residues 19-35 (KSET…HIKR) and 52-65 (SAEE…LVKR). Asn83 is subject to Asparagine amide. Residues 87-100 (SAEEQDLAEDLVTR) constitute a propeptide that is removed on maturation. Asn118 is modified (asparagine amide). The propeptide occupies 122–135 (SAEEQDLAEDLVKR). Asn153 is subject to Asparagine amide. A propeptide spanning residues 157–170 (SAEEQDLAEDLVTR) is cleaved from the precursor. Lysine amide is present on Lys188. A propeptide spanning residues 192-205 (SAEDQDLAEDLVTR) is cleaved from the precursor. The residue at position 223 (Lys223) is a Lysine amide. A propeptide spanning residues 227–235 (SAEQEKDMK) is cleaved from the precursor.

It belongs to the maximin-S family. As to expression, expressed by the skin dorsal glands.

It localises to the secreted. Its function is as follows. Maximin-S1 has no antimicrobial activity. Has no hemolytic activity. Maximin-S2 has an activity against mycoplasma but has no activity against common Gram-positive and Gram-negative bacteria nor fungi. Has no hemolytic activity. In terms of biological role, maximin-S3 has an activity against mycoplasma but has no activity against common Gram-positive and Gram-negative bacteria nor fungi. Has no hemolytic activity. Functionally, maximin-S4 has an activity against mycoplasma but has no activity against common Gram-positive and Gram-negative bacteria nor fungi. Has no hemolytic activity. Its function is as follows. Maximin-S5 has an activity against mycoplasma but has no activity against common Gram-positive and Gram-negative bacteria nor fungi. Has no hemolytic activity. This is Maximins-S type A from Bombina maxima (Giant fire-bellied toad).